A 336-amino-acid chain; its full sequence is Probable G-protein coupled receptor 82 (336 aa).

Over 1-11 (MNNNTTCIQPS) the chain is Extracellular. N-linked (GlcNAc...) asparagine glycans are attached at residues N3 and N4. Residues 12–32 (MISSMALPIIYILLCIVGVFG) form a helical membrane-spanning segment. The Cytoplasmic portion of the chain corresponds to 33–55 (NTLSQWIFLTKIGKKTSTHIYLS). The helical transmembrane segment at 56-76 (HLVTANLLVCSAMPFMSIYFL) threads the bilayer. Over 77 to 92 (KGFQWEYQSAQCRVVN) the chain is Extracellular. A helical membrane pass occupies residues 93 to 115 (FLGTLSMHASMFVSLLILSWIAI). Residues 116–156 (SRYATLMQKDSSQETTSCYEKIFYGHLLKKFRQPNFARKLC) lie on the Cytoplasmic side of the membrane. The helical transmembrane segment at 157–177 (IYIWGVVLGIIIPVTVYYSVI) threads the bilayer. The Extracellular portion of the chain corresponds to 178-197 (EATEGEESLCYNRQMELGAM). The helical transmembrane segment at 198-218 (ISQIAGLIGTTFIGFSFLVVL) threads the bilayer. Residues 219–251 (TSYYSFVSHLRKIRTCTSIMEKDLTYSSVKRHL) lie on the Cytoplasmic side of the membrane. Residues 252–272 (LVIQILLIVCFLPYSIFKPIF) traverse the membrane as a helical segment. Residues 273–336 (YVLHQRDNCQ…SNSAHMQSYG (64 aa)) lie on the Extracellular side of the membrane.

The protein belongs to the G-protein coupled receptor 1 family.

It is found in the cell membrane. Its function is as follows. Orphan receptor. This is Probable G-protein coupled receptor 82 (GPR82) from Homo sapiens (Human).